A 530-amino-acid chain; its full sequence is Phosphoenolpyruvate carboxykinase (ATP) (530 aa).

Residues R58, Y195, and K201 each contribute to the substrate site. Residues K201, H220, and 236–244 (GLSGTGKTT) contribute to the ATP site. Mn(2+) is bound by residues K201 and H220. D257 provides a ligand contact to Mn(2+). ATP is bound by residues E285, R321, 440-441 (RI), and T446. R321 contacts substrate.

Belongs to the phosphoenolpyruvate carboxykinase (ATP) family. Mn(2+) is required as a cofactor.

It localises to the cytoplasm. The catalysed reaction is oxaloacetate + ATP = phosphoenolpyruvate + ADP + CO2. Its pathway is carbohydrate biosynthesis; gluconeogenesis. Involved in the gluconeogenesis. Catalyzes the conversion of oxaloacetate (OAA) to phosphoenolpyruvate (PEP) through direct phosphoryl transfer between the nucleoside triphosphate and OAA. The chain is Phosphoenolpyruvate carboxykinase (ATP) from Staphylococcus aureus (strain bovine RF122 / ET3-1).